The chain runs to 246 residues: Mast cell protease 1 (246 aa).

A signal peptide spans 1–18 (MQALLFLLALLWPPEAGA). The propeptide at 19–20 (EE) is activation peptide. One can recognise a Peptidase S1 domain in the interval 21–244 (IIGGVESKPH…YVPWINLVIR (224 aa)). Cysteine 50 and cysteine 66 form a disulfide bridge. Catalysis depends on charge relay system residues histidine 65 and aspartate 109. Cystine bridges form between cysteine 143–cysteine 208 and cysteine 174–cysteine 187. The Charge relay system role is filled by serine 202.

This sequence belongs to the peptidase S1 family. Granzyme subfamily.

This is Mast cell protease 1 from Meriones unguiculatus (Mongolian jird).